A 470-amino-acid chain; its full sequence is D-serine/D-alanine/glycine transporter (470 aa).

Helical transmembrane passes span 30–50 (LIAIGGAIGTGLFMGSGKTIS), 51–71 (LAGPSIIFVYMIIGFMLFFVM), 102–122 (FTGWTYWFCWVVTGMADVVAI), 128–148 (FWFPGLSDWVASLSVIILLLV), 162–182 (FWFAMIKIVAIVSLIVVGLVM), 211–231 (LSGFFAGFQIAVFAFVGIELV), 256–276 (IIMFYVFSLIVIMSVTPWSSV), 283–303 (FVELFVLVGLPAAASVINFVV), 350–370 (FSCICLLGGVVMLYVNPSVIG), 371–391 (AFTMITTVSAILFMFVWTIIL), 413–433 (PLGKLMCWVCMAFFVFVLVLL), and 441–461 (QALLVTPLWFIALGLGWLFIG).

Belongs to the amino acid-polyamine-organocation (APC) superfamily. Amino acid transporter (AAT) (TC 2.A.3.1) family.

It is found in the cell inner membrane. The enzyme catalyses D-alanine(in) + H(+)(in) = D-alanine(out) + H(+)(out). The catalysed reaction is D-serine(out) + H(+)(out) = D-serine(in) + H(+)(in). It carries out the reaction glycine(in) + H(+)(in) = glycine(out) + H(+)(out). It catalyses the reaction D-cycloserine(in) + H(+)(in) = D-cycloserine(out) + H(+)(out). Its activity is regulated as follows. Uptake of D-serine is inhibited by D-alanine, D-cycloserine, glycine and at high concentrations of D-threonine. In terms of biological role, permease that is involved in the transport across the cytoplasmic membrane of D-alanine, D-serine and glycine. Is the only transporter of D-alanine. Transports D-serine less efficiently than DsdX. In addition, in minimal media, transports the broad spectrum antibiotic D-cycloserine into the cell. Transports D-cycloserine only in minimal media, and not in a complex medium, suggesting that CycA does not play a role in D-cycloserine transport when E.coli is grown in a complex or biologically relevant medium, probably due to competition from other CycA substrates present in the medium. The sequence is that of D-serine/D-alanine/glycine transporter (cycA) from Escherichia coli O6:H1 (strain CFT073 / ATCC 700928 / UPEC).